The primary structure comprises 443 residues: L-ornithine N(5)-monooxygenase (443 aa).

FAD is bound by residues aspartate 45–histidine 53 and glutamine 64. Substrate is bound at residue lysine 69. Valine 130 is an FAD binding site. NADP(+) contacts are provided by residues glycine 215–serine 218 and arginine 240. Substrate contacts are provided by residues asparagine 254–phenylalanine 257 and asparagine 284. NADP(+) is bound at residue asparagine 284 to serine 286. Threonine 407 to leucine 409 provides a ligand contact to FAD. Position 410 (serine 410) interacts with substrate.

Belongs to the lysine N(6)-hydroxylase/L-ornithine N(5)-oxygenase family. Homotetramer. FAD serves as cofactor.

It is found in the cell inner membrane. It catalyses the reaction L-ornithine + NADPH + O2 = N(5)-hydroxy-L-ornithine + NADP(+) + H2O. The protein operates within siderophore biosynthesis; pyoverdin biosynthesis. Catalyzes the conversion of L-ornithine to N(5)-hydroxyornithine, the first step in the biosynthesis of all hydroxamate-containing siderophores, such as pyoverdin. Pyoverdin is a hydroxamate siderophore composed of a 6,7-dihydroxyquinoline-containing fluorescent chromophore joined to the N-terminus of a partly cyclic octapeptide (D-Ser-L-Arg-D-Ser-L-N(5)-OH-Orn-L-Lys-L-N(5)-OH-Orn-L-Thr-L-Thr in strain PAO1). Specific for NADPH, which plays a role in stabilization of the C4a-hydroperoxyflavin intermediate. This is L-ornithine N(5)-monooxygenase from Pseudomonas aeruginosa (strain ATCC 15692 / DSM 22644 / CIP 104116 / JCM 14847 / LMG 12228 / 1C / PRS 101 / PAO1).